Here is a 328-residue protein sequence, read N- to C-terminus: Urokinase plasminogen activator surface receptor (328 aa).

The signal sequence occupies residues 1-24 (MGLLRRRLLLLVVVVTTCVPASQG). 3 consecutive UPAR/Ly6 domains span residues 25–118 (LRCI…GRYL), 118–213 (LECA…PPNG), and 214–299 (FQCY…RPTG). 3 disulfides stabilise this stretch: cysteine 27/cysteine 48, cysteine 30/cysteine 36, and cysteine 41/cysteine 69. N-linked (GlcNAc...) asparagine glycosylation occurs at asparagine 76. Cystine bridges form between cysteine 95/cysteine 100, cysteine 120/cysteine 147, cysteine 123/cysteine 130, cysteine 140/cysteine 169, cysteine 175/cysteine 192, cysteine 193/cysteine 198, cysteine 216/cysteine 244, cysteine 219/cysteine 227, cysteine 237/cysteine 263, cysteine 269/cysteine 288, and cysteine 289/cysteine 294. Asparagine 184, asparagine 194, asparagine 222, asparagine 255, asparagine 283, and asparagine 290 each carry an N-linked (GlcNAc...) asparagine glycan. The GPI-anchor amidated glycine moiety is linked to residue glycine 299. Residues 300–328 (GAPGPGPAHLILIASLLLTLRLWGIPLWT) constitute a propeptide, removed in mature form.

In terms of assembly, monomer. Interacts (via the UPAR/Ly6 domains) with SRPX2. Interacts with MRC2. Interacts with SORL1 (via N-terminal ectodomain); this interaction decreases PLAUR internalization. The ternary complex composed of PLAUR-PLAU-SERPINE1 also interacts with SORL1. Interacts with CD82; this interaction prevents PLAUR from binding to its high affinity ligand PLAU.

Its subcellular location is the cell membrane. The protein resides in the secreted. In terms of biological role, acts as a receptor for urokinase plasminogen activator. Plays a role in localizing and promoting plasmin formation. Mediates the proteolysis-independent signal transduction activation effects of U-PA. The protein is Urokinase plasminogen activator surface receptor (Plaur) of Rattus norvegicus (Rat).